We begin with the raw amino-acid sequence, 233 residues long: ATP synthase subunit a, chloroplastic (233 aa).

4 helical membrane-spanning segments follow: residues 27 to 47 (VLLI…LGTL), 84 to 104 (VPFV…GALI), 122 to 142 (DINT…YAGF), and 192 to 212 (VLCL…GIFA).

The protein belongs to the ATPase A chain family. As to quaternary structure, F-type ATPases have 2 components, CF(1) - the catalytic core - and CF(0) - the membrane proton channel. CF(1) has five subunits: alpha(3), beta(3), gamma(1), delta(1), epsilon(1). CF(0) has four main subunits: a, b, b' and c.

Its subcellular location is the plastid. The protein localises to the chloroplast thylakoid membrane. In terms of biological role, key component of the proton channel; it plays a direct role in the translocation of protons across the membrane. This chain is ATP synthase subunit a, chloroplastic, found in Ochrosphaera neapolitana.